Reading from the N-terminus, the 197-residue chain is Ion-translocating oxidoreductase complex subunit B (197 aa).

The hydrophobic stretch occupies residues 1 to 26 (MSIVIIAVLALSALALTFGAVLGFAS). The region spanning 32–90 (EGNPIVDQIDGLLPQTQCGQCGYPGCRPYAEAIANGDAINKCPPGGEATITALADLLDV) is the 4Fe-4S domain. Positions 49, 52, 57, 73, 115, 118, 121, 125, 145, 148, 151, and 155 each coordinate [4Fe-4S] cluster. 4Fe-4S ferredoxin-type domains lie at 106–135 (QVAY…GAAK) and 136–165 (QMHT…MIPA).

It belongs to the 4Fe4S bacterial-type ferredoxin family. RnfB subfamily. As to quaternary structure, the complex is composed of six subunits: RnfA, RnfB, RnfC, RnfD, RnfE and RnfG. Requires [4Fe-4S] cluster as cofactor.

The protein resides in the cell inner membrane. Part of a membrane-bound complex that couples electron transfer with translocation of ions across the membrane. This chain is Ion-translocating oxidoreductase complex subunit B, found in Hahella chejuensis (strain KCTC 2396).